The sequence spans 210 residues: LexA repressor (210 aa).

A DNA-binding region (H-T-H motif) is located at residues 31–51 (RAEISRELGFRSPNAAEEHLK). Residues S126 and K163 each act as for autocatalytic cleavage activity in the active site.

Belongs to the peptidase S24 family. As to quaternary structure, homodimer.

The catalysed reaction is Hydrolysis of Ala-|-Gly bond in repressor LexA.. Its function is as follows. Represses a number of genes involved in the response to DNA damage (SOS response), including recA and lexA. In the presence of single-stranded DNA, RecA interacts with LexA causing an autocatalytic cleavage which disrupts the DNA-binding part of LexA, leading to derepression of the SOS regulon and eventually DNA repair. The protein is LexA repressor of Actinobacillus succinogenes (strain ATCC 55618 / DSM 22257 / CCUG 43843 / 130Z).